The sequence spans 690 residues: MKRLPLLVVFSTLLNCSYTQNCTKTPCLPNAKCEIRNGIEACYCNMGFSGNGVTICEDDNECGNLTQSCGENANCTNTEGSYYCMCVPGFRSSSNQDRFITNDGTVCIENVNANCHLDNVCIAANINKTLTKIRSIKEPVALLQEVYRNSVTDLSPTDIITYIEILAESSSLLGYKNNTISAKDTLSNSTLTEFVKTVNNFVQRDTFVVWDKLSVNHRRTHLTKLMHTVEQATLRISQSFQKTTEFDTNSTDIALKVFFFDSYNMKHIHPHMNMDGDYINIFPKRKAAYDSNGNVAVAFVYYKSIGPLLSSSDNFLLKPQNYDNSEEEERVISSVISVSMSSNPPTLYELEKITFTLSHRKVTDRYRSLCAFWNYSPDTMNGSWSSEGCELTYSNETHTSCRCNHLTHFAILMSSGPSIGIKDYNILTRITQLGIIISLICLAICIFTFWFFSEIQSTRTTIHKNLCCSLFLAELVFLVGINTNTNKLFCSIIAGLLHYFFLAAFAWMCIEGIHLYLIVVGVIYNKGFLHKNFYIFGYLSPAVVVGFSAALGYRYYGTTKVCWLSTENNFIWSFIGPACLIILVNLLAFGVIIYKVFRHTAGLKPEVSCFENIRSCARGALALLFLLGTTWIFGVLHVVHASVVTAYLFTVSNAFQGMFIFLFLCVLSRKIQEEYYRLFKNVPCCFGCLR.

The signal sequence occupies residues 1-19 (MKRLPLLVVFSTLLNCSYT). The EGF-like 1 domain maps to 20–57 (QNCTKTPCLPNAKCEIRNGIEACYCNMGFSGNGVTICE). Residues 20–432 (QNCTKTPCLP…DYNILTRITQ (413 aa)) lie on the Extracellular side of the membrane. Asn21 is a glycosylation site (N-linked (GlcNAc...) asparagine). Disulfide bonds link Cys22/Cys33, Cys27/Cys42, Cys44/Cys56, Cys62/Cys75, Cys69/Cys84, and Cys86/Cys107. One can recognise an EGF-like 2; calcium-binding domain in the interval 58 to 108 (DDNECGNLTQSCGENANCTNTEGSYYCMCVPGFRSSSNQDRFITNDGTVCI). N-linked (GlcNAc...) asparagine glycans are attached at residues Asn64 and Asn74. Asn127, Asn177, Asn188, Asn249, Asn381, and Asn395 each carry an N-linked (GlcNAc...) asparagine glycan. In terms of domain architecture, GAIN-B spans 244–419 (TEFDTNSTDI…AILMSSGPSI (176 aa)). Intrachain disulfides connect Cys370–Cys401 and Cys389–Cys403. A GPS region spans residues 370 to 419 (CAFWNYSPDTMNGSWSSEGCELTYSNETHTSCRCNHLTHFAILMSSGPSI). The chain crosses the membrane as a helical span at residues 433–453 (LGIIISLICLAICIFTFWFFS). Topologically, residues 454-460 (EIQSTRT) are cytoplasmic. A helical membrane pass occupies residues 461–481 (TIHKNLCCSLFLAELVFLVGI). Residues 482–499 (NTNTNKLFCSIIAGLLHY) lie on the Extracellular side of the membrane. The chain crosses the membrane as a helical span at residues 500–520 (FFLAAFAWMCIEGIHLYLIVV). Over 521 to 532 (GVIYNKGFLHKN) the chain is Cytoplasmic. Residues 533–553 (FYIFGYLSPAVVVGFSAALGY) traverse the membrane as a helical segment. Residues 554 to 573 (RYYGTTKVCWLSTENNFIWS) are Extracellular-facing. A helical transmembrane segment spans residues 574–594 (FIGPACLIILVNLLAFGVIIY). Topologically, residues 595-618 (KVFRHTAGLKPEVSCFENIRSCAR) are cytoplasmic. The helical transmembrane segment at 619–639 (GALALLFLLGTTWIFGVLHVV) threads the bilayer. Residues 640–646 (HASVVTA) are Extracellular-facing. The chain crosses the membrane as a helical span at residues 647-667 (YLFTVSNAFQGMFIFLFLCVL). Topologically, residues 668-690 (SRKIQEEYYRLFKNVPCCFGCLR) are cytoplasmic.

The protein belongs to the G-protein coupled receptor 2 family. Adhesion G-protein coupled receptor (ADGR) subfamily. In terms of assembly, heterodimer of 2 chains generated by proteolytic processing; the large extracellular N-terminal fragment and the membrane-bound C-terminal fragment predominantly remain associated and non-covalently linked. Glycosylated. Post-translationally, proteolytically cleaved into 2 subunits, an extracellular alpha subunit and a seven-transmembrane subunit. Detected in the majority of epithelial cells in tumor and normal tissues. Expressed also in human umbilical vein endothelial cells.

It localises to the cell membrane. Endothelial orphan receptor that acts as a key regulator of angiogenesis. The protein is Adhesion G protein-coupled receptor L4 of Homo sapiens (Human).